Consider the following 444-residue polypeptide: MSSSYDEASLAPEETTDSFWEVGNYKRTVKRIDDGHRLCNDLMNCVQERAKIEKAYGQQLTDWAKRWRQLIEKGPQYGSLERAWGAIMTEADKVSELHQEVKNNLLNEDLEKVKNWQKDAYHKQIMGGFKETKEAEDGFRKAQKPWAKKMKELEAAKKAYHLACKEEKLAMTREMNSKSEQSVTPEQQKKLQDKVDKCKQDVQKTQEKYEKVLEDVGKTTPQYMENMEQVFEQCQQFEEKRLVFLKEVLLDIKRHLNLAENSSYIHVYRELEQAIRGADAQEDLRWFRSTSGPGMPMNWPQFEEWNPDLPHTTTKKEKQPKKAEGVALTNATGAVESTSQAGDRGSVSSYDRGQPYATEWSDDESGNPFGGSEANGGANPFEDDSKGVRVRALYDYDGQEQDELSFKAGDELTKLGEEDEQGWCRGRLDSGQLGLYPANYVEAI.

Phosphoserine occurs at positions 2 and 79. In terms of domain architecture, F-BAR spans 13–283 (EETTDSFWEV…AIRGADAQED (271 aa)). A coiled-coil region spans residues 26 to 275 (KRTVKRIDDG…HVYRELEQAI (250 aa)). Disordered stretches follow at residues 173-194 (REMNSKSEQSVTPEQQKKLQDK) and 309-386 (LPHT…DDSK). Phosphothreonine is present on Thr-184. The segment covering 314–324 (TKKEKQPKKAE) has biased composition (basic and acidic residues). Over residues 329–351 (TNATGAVESTSQAGDRGSVSSYD) the composition is skewed to polar residues. A phosphoserine mark is found at Ser-346, Ser-348, Ser-349, Ser-361, and Ser-365. Positions 385 to 444 (SKGVRVRALYDYDGQEQDELSFKAGDELTKLGEEDEQGWCRGRLDSGQLGLYPANYVEAI) constitute an SH3 domain. Phosphotyrosine is present on Tyr-394. Phosphoserine is present on residues Ser-405 and Ser-430.

It belongs to the PACSIN family. Homodimer. May form heterooligomers with other PACSINs. Interacts with both COBL and DBNL. Identified in a complex composed of COBL, PACSIN1 and WASL. Interacts (via SH3 domain) with SYNJ1 and WASL. Interacts (via SH3 domain) with DNM1; the interaction is reduced by DNM1 phosphorylation. Interacts with DNM2 and DNM3. Interacts with MAPT. Interacts with EHD1 and EHD3. Interacts with TRPV4. Phosphorylated by casein kinase 2 (CK2) and protein kinase C (PKC).

Its subcellular location is the cytoplasm. It is found in the cell projection. The protein localises to the synapse. It localises to the synaptosome. The protein resides in the ruffle membrane. Its subcellular location is the membrane. It is found in the cytoplasmic vesicle membrane. The protein localises to the cytosol. It localises to the cell membrane. In terms of biological role, binds to membranes via its F-BAR domain and mediates membrane tubulation. Plays a role in the reorganization of the microtubule cytoskeleton via its interaction with MAPT; this decreases microtubule stability and inhibits MAPT-induced microtubule polymerization. Plays a role in cellular transport processes by recruiting DNM1, DNM2 and DNM3 to membranes. Plays a role in the reorganization of the actin cytoskeleton and in neuron morphogenesis via its interaction with COBL and WASL, and by recruiting COBL to the cell cortex. Plays a role in the regulation of neurite formation, neurite branching and the regulation of neurite length. Required for normal synaptic vesicle endocytosis; this process retrieves previously released neurotransmitters to accommodate multiple cycles of neurotransmission. Required for normal excitatory and inhibitory synaptic transmission. The sequence is that of Protein kinase C and casein kinase substrate in neurons protein 1 (Pacsin1) from Pongo abelii (Sumatran orangutan).